The chain runs to 74 residues: Translation initiation factor IF-1 2 (74 aa).

The region spanning 1–73 (MTKNKNVIEV…TRGRIVFRYR (73 aa)) is the S1-like domain.

This sequence belongs to the IF-1 family. In terms of assembly, component of the 30S ribosomal translation pre-initiation complex which assembles on the 30S ribosome in the order IF-2 and IF-3, IF-1 and N-formylmethionyl-tRNA(fMet); mRNA recruitment can occur at any time during PIC assembly.

The protein localises to the cytoplasm. Its function is as follows. One of the essential components for the initiation of protein synthesis. Stabilizes the binding of IF-2 and IF-3 on the 30S subunit to which N-formylmethionyl-tRNA(fMet) subsequently binds. Helps modulate mRNA selection, yielding the 30S pre-initiation complex (PIC). Upon addition of the 50S ribosomal subunit IF-1, IF-2 and IF-3 are released leaving the mature 70S translation initiation complex. This is Translation initiation factor IF-1 2 from Streptomyces avermitilis (strain ATCC 31267 / DSM 46492 / JCM 5070 / NBRC 14893 / NCIMB 12804 / NRRL 8165 / MA-4680).